An 880-amino-acid polypeptide reads, in one-letter code: GAS2-like protein 2 (880 aa).

Residues 32–159 (EAMKEDLAEW…CLLELGRRAW (128 aa)) enclose the Calponin-homology (CH) domain. The segment at 180-200 (RRELALPPPDPSPPAPPRRQP) is disordered. Pro residues predominate over residues 185 to 198 (LPPPDPSPPAPPRR). A GAR domain is found at 201–273 (CHFRNLDQMV…HYLDKHDPCR (73 aa)). 4 disordered regions span residues 283–360 (SFLK…MAPF), 372–437 (WRQP…NPTP), 489–533 (ESVR…ELGR), and 676–880 (APTG…ESWV). The span at 301 to 315 (GPSQTQPTMTISRSQ) shows a compositional bias: polar residues. The segment at 438–880 (QRLRAIEATT…PLPPEEESWV (443 aa)) is interaction with ADORA2A. The span at 506 to 515 (RLPPARPPTP) shows a compositional bias: pro residues. Positions 725-734 (QDCSASTVSA) are enriched in polar residues. Basic residues-rich tracts occupy residues 757–767 (KGRRTLRKPKR) and 774–785 (LKLRPRIRPRRD).

This sequence belongs to the GAS2 family. Interacts with ADORA2A (via its cytoplasmic C-terminal domain). Interacts with GNAS, GNAL, GNAQ, and GNA13. Interacts with MAPRE1. In terms of tissue distribution, expressed in bronchial and nasal epithelial cells (at protein level). Expressed in brain, kidney, lung, testis, fallopian tubes, and skeletal muscle. Expressed at low levels in stomach and colon.

The protein localises to the cytoplasm. It is found in the cytoskeleton. The protein resides in the cell membrane. It localises to the stress fiber. Its subcellular location is the cilium basal body. Involved in the cross-linking of microtubules and microfilaments. Regulates microtubule dynamics and stability by interacting with microtubule plus-end tracking proteins, such as MAPRE1, to regulate microtubule growth along actin stress fibers. Enhances ADORA2-mediated adenylyl cyclase activation by acting as a scaffold to recruit trimeric G-protein complexes to ADORA2A. Regulates ciliary orientation and performance in cells located in the airway. The protein is GAS2-like protein 2 (GAS2L2) of Homo sapiens (Human).